The sequence spans 89 residues: Class II hydrophobin 2 (89 aa).

Residues 1–15 (MKLYIAAALLTLGLA) form the signal peptide. 4 disulfide bridges follow: C34/C74, C45/C66, C46/C58, and C75/C86.

Belongs to the cerato-ulmin hydrophobin family. Homodimer. Homodimers further self-assemble to form highly ordered films at water-air interfaces through intermolecular interactions.

The protein localises to the secreted. It is found in the cell wall. In terms of biological role, aerial growth, conidiation, and dispersal of filamentous fungi in the environment rely upon a capability of their secreting small amphipathic proteins called hydrophobins (HPBs) with low sequence identity. Class I can self-assemble into an outermost layer of rodlet bundles on aerial cell surfaces, conferring cellular hydrophobicity that supports fungal growth, development and dispersal; whereas Class II form highly ordered films at water-air interfaces through intermolecular interactions but contribute nothing to the rodlet structure. The sequence is that of Class II hydrophobin 2 from Trichoderma asperellum (strain ATCC 204424 / CBS 433.97 / NBRC 101777).